The chain runs to 347 residues: ATP-dependent (S)-NAD(P)H-hydrate dehydratase (347 aa).

The YjeF C-terminal domain occupies 53 to 344 (TLQLVRNIIP…AEVGAAFSKL (292 aa)). Tyr85 is subject to Phosphotyrosine. (6S)-NADPHX is bound by residues Gly153 and 206 to 212 (NHVEFSR). N-linked (GlcNAc...) asparagine glycosylation occurs at Asn240. ATP contacts are provided by residues 246-250 (KGERD) and 265-274 (GSSRRCGGQG). Asp275 contributes to the (6S)-NADPHX binding site. An N-linked (GlcNAc...) asparagine glycan is attached at Asn297.

The protein belongs to the NnrD/CARKD family. The cofactor is Mg(2+).

Its subcellular location is the mitochondrion. It carries out the reaction (6S)-NADHX + ATP = ADP + phosphate + NADH + H(+). It catalyses the reaction (6S)-NADPHX + ATP = ADP + phosphate + NADPH + H(+). Catalyzes the dehydration of the S-form of NAD(P)HX at the expense of ATP, which is converted to ADP. Together with NAD(P)HX epimerase, which catalyzes the epimerization of the S- and R-forms, the enzyme allows the repair of both epimers of NAD(P)HX, a damaged form of NAD(P)H that is a result of enzymatic or heat-dependent hydration. The protein is ATP-dependent (S)-NAD(P)H-hydrate dehydratase of Homo sapiens (Human).